Here is a 493-residue protein sequence, read N- to C-terminus: Lysine--tRNA ligase (493 aa).

Positions 402 and 409 each coordinate Mg(2+).

This sequence belongs to the class-II aminoacyl-tRNA synthetase family. Homodimer. Mg(2+) is required as a cofactor.

Its subcellular location is the cytoplasm. It catalyses the reaction tRNA(Lys) + L-lysine + ATP = L-lysyl-tRNA(Lys) + AMP + diphosphate. The sequence is that of Lysine--tRNA ligase from Ureaplasma urealyticum serovar 10 (strain ATCC 33699 / Western).